Here is a 382-residue protein sequence, read N- to C-terminus: 8-amino-7-oxononanoate synthase (382 aa).

Arg26 provides a ligand contact to substrate. A pyridoxal 5'-phosphate-binding site is contributed by Gly104 to Tyr105. A substrate-binding site is contributed by His129. Residues Ser175, Asp200–His203, and Thr232–Lys235 contribute to the pyridoxal 5'-phosphate site. Lys235 is subject to N6-(pyridoxal phosphate)lysine. Residue Thr345 participates in substrate binding.

This sequence belongs to the class-II pyridoxal-phosphate-dependent aminotransferase family. BioF subfamily. As to quaternary structure, homodimer. It depends on pyridoxal 5'-phosphate as a cofactor.

It catalyses the reaction 6-carboxyhexanoyl-[ACP] + L-alanine + H(+) = (8S)-8-amino-7-oxononanoate + holo-[ACP] + CO2. Its pathway is cofactor biosynthesis; biotin biosynthesis. Catalyzes the decarboxylative condensation of pimeloyl-[acyl-carrier protein] and L-alanine to produce 8-amino-7-oxononanoate (AON), [acyl-carrier protein], and carbon dioxide. The chain is 8-amino-7-oxononanoate synthase (bioF) from Mycolicibacterium smegmatis (strain ATCC 700084 / mc(2)155) (Mycobacterium smegmatis).